Reading from the N-terminus, the 186-residue chain is Adenine phosphoribosyltransferase (186 aa).

It belongs to the purine/pyrimidine phosphoribosyltransferase family. In terms of assembly, homodimer.

The protein localises to the cytoplasm. It catalyses the reaction AMP + diphosphate = 5-phospho-alpha-D-ribose 1-diphosphate + adenine. It participates in purine metabolism; AMP biosynthesis via salvage pathway; AMP from adenine: step 1/1. Functionally, catalyzes a salvage reaction resulting in the formation of AMP, that is energically less costly than de novo synthesis. In Xanthomonas campestris pv. campestris (strain 8004), this protein is Adenine phosphoribosyltransferase.